A 325-amino-acid polypeptide reads, in one-letter code: Inner membrane protein YrbG (325 aa).

The Periplasmic portion of the chain corresponds to 1 to 5 (MLLAT). Residues 6 to 26 (ALLIVGLLLVVYSADRLVFAA) traverse the membrane as a helical segment. Residues 27–37 (SILCRTFGIPP) lie on the Cytoplasmic side of the membrane. Residues 38 to 58 (LIIGMTVVSIGTSLPEVIVSL) traverse the membrane as a helical segment. Residues 59-67 (AASLHEQRD) lie on the Periplasmic side of the membrane. Residues 68–88 (LAVGTALGSNIINILLILGLA) traverse the membrane as a helical segment. Residues 89-104 (ALVRPFTVHSDVLRRE) lie on the Cytoplasmic side of the membrane. The helical transmembrane segment at 105-125 (LPLMLLVSVVAGSVLYDGQLS) threads the bilayer. Position 126 (R126) is a topological domain, periplasmic. The chain crosses the membrane as a helical span at residues 127 to 147 (SDGIFLLFLAVLWLLFIVKLA). Residues 148-169 (RQAERQGTDSLTREQLAELPRD) lie on the Cytoplasmic side of the membrane. Residues 170-190 (GGLPVAFLWLGIALIIMPVAT) form a helical membrane-spanning segment. Residues 191–198 (RMVVDNAT) are Periplasmic-facing. Residues 199–219 (VLANYFAISELTMGLTAIAIG) form a helical membrane-spanning segment. Residues 220 to 243 (TSLPELATAIAGVRKGENDIAVGN) are Cytoplasmic-facing. Residues 244 to 264 (IIGANIFNIVIVLGLPALITP) traverse the membrane as a helical segment. The Periplasmic portion of the chain corresponds to 265–269 (GEIDP). A helical membrane pass occupies residues 270-290 (LAYSRDYSVMLLVSIIFALLC). Residues 291–302 (WRRSPQPGRGVG) are Cytoplasmic-facing. Residues 303-323 (VLLTGGFIVWLAMLYWLSPIL) form a helical membrane-spanning segment. The Periplasmic portion of the chain corresponds to 324–325 (VE).

The protein belongs to the Ca(2+):cation antiporter (CaCA) (TC 2.A.19) family.

The protein resides in the cell inner membrane. The chain is Inner membrane protein YrbG (yrbG) from Escherichia coli (strain K12).